A 211-amino-acid polypeptide reads, in one-letter code: ATP phosphoribosyltransferase (211 aa).

It belongs to the ATP phosphoribosyltransferase family. Short subfamily. Heteromultimer composed of HisG and HisZ subunits.

It is found in the cytoplasm. It carries out the reaction 1-(5-phospho-beta-D-ribosyl)-ATP + diphosphate = 5-phospho-alpha-D-ribose 1-diphosphate + ATP. The protein operates within amino-acid biosynthesis; L-histidine biosynthesis; L-histidine from 5-phospho-alpha-D-ribose 1-diphosphate: step 1/9. Functionally, catalyzes the condensation of ATP and 5-phosphoribose 1-diphosphate to form N'-(5'-phosphoribosyl)-ATP (PR-ATP). Has a crucial role in the pathway because the rate of histidine biosynthesis seems to be controlled primarily by regulation of HisG enzymatic activity. The sequence is that of ATP phosphoribosyltransferase from Bacillus cereus (strain AH187).